Reading from the N-terminus, the 198-residue chain is Ribonuclease HII (198 aa).

Positions 11-198 constitute an RNase H type-2 domain; sequence ELIAGVDEVG…SPVRKLLENE (188 aa). Residues D17, E18, and D109 each coordinate a divalent metal cation.

The protein belongs to the RNase HII family. Requires Mn(2+) as cofactor. It depends on Mg(2+) as a cofactor.

The protein localises to the cytoplasm. The enzyme catalyses Endonucleolytic cleavage to 5'-phosphomonoester.. Its function is as follows. Endonuclease that specifically degrades the RNA of RNA-DNA hybrids. In Mannheimia succiniciproducens (strain KCTC 0769BP / MBEL55E), this protein is Ribonuclease HII.